The following is a 543-amino-acid chain: MRPVGSKYLLEEPLGRGATGTVWRARQRETAGAEAAVAGQPGETVAIKVLKEELASDADIVMRFLRERSVLLRLTHPNIVRVRDLVVEGELLALVMDLIDGPDLHRYLRENGPLTPVAAALLTAQIADALAASHADGVVHRDLKPANVLLKQTGGEMHPMLTDFGIARLADSPGLTRTHEFVGTPAYVAPESAEGRPQTSAVDVYGAGILLYELVTGRPPFGGGSALEVLHQHLSAEPRRPSTVPDPLWTVIERCLRKNPDDRPSAENLARGLRVVAEGIGVHANSAQIGAAENVGALLAPDPAPAQVPGAPDAAYDPNGATSVLPHTSGPAGAADPTAVLPSTGAPDPTAVMPPVPPGQPGAPGQGGPEDPHPWQNQLRAARDRNEQTQVQYLDPNQDPLRRRPQRQVSRPPQQPRQAPQGPPPQQPGYGYPQQQQPQRYATPQPQQPQRYAPPPAPEPQQPRREPRPPRQRSANPMRIPGLGCLKGCLVTVVVLFVAGWLVWELSPLQEWIGTGKGYWDQLTDWFTTVTDWIGDLGGSGGG.

The Protein kinase domain maps to 8–276 (YLLEEPLGRG…ENLARGLRVV (269 aa)). ATP is bound by residues 14 to 22 (LGRGATGTV) and Lys48. Asp142 serves as the catalytic Proton acceptor. Positions 303 to 480 (PAPAQVPGAP…RQRSANPMRI (178 aa)) are disordered. The segment covering 352-361 (VMPPVPPGQP) has biased composition (pro residues). Composition is skewed to low complexity over residues 407 to 420 (RQVS…RQAP) and 428 to 451 (PGYG…QPQR). The segment covering 452–461 (YAPPPAPEPQ) has biased composition (pro residues).

This sequence belongs to the protein kinase superfamily. Ser/Thr protein kinase family. Post-translationally, autophosphorylated mainly at Thr and slightly at Ser.

It carries out the reaction L-seryl-[protein] + ATP = O-phospho-L-seryl-[protein] + ADP + H(+). The enzyme catalyses L-threonyl-[protein] + ATP = O-phospho-L-threonyl-[protein] + ADP + H(+). The chain is Serine/threonine-protein kinase PkaA (pkaA) from Streptomyces coelicolor (strain ATCC BAA-471 / A3(2) / M145).